We begin with the raw amino-acid sequence, 252 residues long: Delta-like protein dsl-1 (252 aa).

A signal peptide spans 1 to 17; the sequence is MLKYLIFLAILISVVHS. The region spanning 120-164 is the DSL domain; it reads IKCNRYWHGLHCDHFCNDDFARTINRRCTQNGTLGCLEGFHGPNC. 6 disulfides stabilise this stretch: Cys122–Cys131, Cys135–Cys147, Cys155–Cys164, Cys173–Cys181, Cys175–Cys197, and Cys199–Cys209. One can recognise an EGF-like domain in the interval 169–210; sequence PADSCKCQNGGKCVSSLENTWAQNGSLICECRLGHFEGKHCE.

In terms of assembly, may interact with lin-12/Notch receptor.

The protein resides in the secreted. In terms of biological role, probable secreted Notch ligand involved in the mediation of Notch signaling. Involved in the lin-12/Notch pathway-mediated signaling of cell fate in vulval precursor cells (VPCs), acting redundantly with lag-2, apx-1 and osm-11. May also be involved in glp-1/Notch signaling. The polypeptide is Delta-like protein dsl-1 (Caenorhabditis elegans).